Reading from the N-terminus, the 68-residue chain is Large ribosomal subunit protein bL33c (68 aa).

This sequence belongs to the bacterial ribosomal protein bL33 family.

It is found in the plastid. The protein localises to the chloroplast. This Lactuca sativa (Garden lettuce) protein is Large ribosomal subunit protein bL33c.